Consider the following 465-residue polypeptide: Probable Xaa-Pro aminopeptidase pepP (465 aa).

Mn(2+) contacts are provided by Asp263, Asp274, Glu397, and Glu437.

This sequence belongs to the peptidase M24B family. Mn(2+) serves as cofactor.

The catalysed reaction is Release of any N-terminal amino acid, including proline, that is linked to proline, even from a dipeptide or tripeptide.. Its function is as follows. Catalyzes the removal of a penultimate prolyl residue from the N-termini of peptides. The chain is Probable Xaa-Pro aminopeptidase pepP (pepP) from Emericella nidulans (strain FGSC A4 / ATCC 38163 / CBS 112.46 / NRRL 194 / M139) (Aspergillus nidulans).